A 143-amino-acid polypeptide reads, in one-letter code: Transcriptional regulator MraZ (143 aa).

SpoVT-AbrB domains are found at residues 5–47 (TYTP…PREE) and 76–119 (TDEQ…DAQA).

The protein belongs to the MraZ family. As to quaternary structure, forms oligomers.

It localises to the cytoplasm. Its subcellular location is the nucleoid. In Rhodococcus jostii (strain RHA1), this protein is Transcriptional regulator MraZ.